The chain runs to 192 residues: Peptidyl-tRNA hydrolase (192 aa).

A tRNA-binding site is contributed by Tyr17. His22 serves as the catalytic Proton acceptor. Residues Phe68, Asn70, and Asn116 each coordinate tRNA.

It belongs to the PTH family. As to quaternary structure, monomer.

The protein localises to the cytoplasm. The catalysed reaction is an N-acyl-L-alpha-aminoacyl-tRNA + H2O = an N-acyl-L-amino acid + a tRNA + H(+). Functionally, hydrolyzes ribosome-free peptidyl-tRNAs (with 1 or more amino acids incorporated), which drop off the ribosome during protein synthesis, or as a result of ribosome stalling. Catalyzes the release of premature peptidyl moieties from peptidyl-tRNA molecules trapped in stalled 50S ribosomal subunits, and thus maintains levels of free tRNAs and 50S ribosomes. The protein is Peptidyl-tRNA hydrolase of Xylella fastidiosa (strain M12).